The sequence spans 257 residues: Imidazole glycerol phosphate synthase subunit HisF (257 aa).

Residues D11 and D130 contribute to the active site.

Belongs to the HisA/HisF family. As to quaternary structure, heterodimer of HisH and HisF.

It localises to the cytoplasm. It catalyses the reaction 5-[(5-phospho-1-deoxy-D-ribulos-1-ylimino)methylamino]-1-(5-phospho-beta-D-ribosyl)imidazole-4-carboxamide + L-glutamine = D-erythro-1-(imidazol-4-yl)glycerol 3-phosphate + 5-amino-1-(5-phospho-beta-D-ribosyl)imidazole-4-carboxamide + L-glutamate + H(+). It participates in amino-acid biosynthesis; L-histidine biosynthesis; L-histidine from 5-phospho-alpha-D-ribose 1-diphosphate: step 5/9. In terms of biological role, IGPS catalyzes the conversion of PRFAR and glutamine to IGP, AICAR and glutamate. The HisF subunit catalyzes the cyclization activity that produces IGP and AICAR from PRFAR using the ammonia provided by the HisH subunit. The sequence is that of Imidazole glycerol phosphate synthase subunit HisF from Vibrio parahaemolyticus serotype O3:K6 (strain RIMD 2210633).